Reading from the N-terminus, the 606-residue chain is Elongation factor 4 (606 aa).

The region spanning lysine 10 to glutamine 192 is the tr-type G domain. GTP-binding positions include aspartate 22–threonine 27 and asparagine 139–aspartate 142.

This sequence belongs to the TRAFAC class translation factor GTPase superfamily. Classic translation factor GTPase family. LepA subfamily.

Its subcellular location is the cell inner membrane. It catalyses the reaction GTP + H2O = GDP + phosphate + H(+). Required for accurate and efficient protein synthesis under certain stress conditions. May act as a fidelity factor of the translation reaction, by catalyzing a one-codon backward translocation of tRNAs on improperly translocated ribosomes. Back-translocation proceeds from a post-translocation (POST) complex to a pre-translocation (PRE) complex, thus giving elongation factor G a second chance to translocate the tRNAs correctly. Binds to ribosomes in a GTP-dependent manner. This chain is Elongation factor 4, found in Nitrosococcus oceani (strain ATCC 19707 / BCRC 17464 / JCM 30415 / NCIMB 11848 / C-107).